A 566-amino-acid polypeptide reads, in one-letter code: Protein OBERON 1 (566 aa).

Residues 1 to 10 (MGTSSGSNLP) show a composition bias toward polar residues. Positions 1-79 (MGTSSGSNLP…KTGPDSHDQH (79 aa)) are disordered. Low complexity predominate over residues 18 to 29 (QQLQTSLSLVSS). Polar residues predominate over residues 47–60 (ESASSQETWPTSKS). The segment covering 64 to 79 (RKTDSGKTGPDSHDQH) has biased composition (basic and acidic residues). Residues 225–289 (LCMCVICNKF…LFKCRACNHT (65 aa)) form a PHD-type zinc finger. A coiled-coil region spans residues 407–522 (EEKTRMYKKA…LFEKIKEQES (116 aa)). The interval 545 to 566 (YNASSPRVDPRSNQRNPFRSNP) is disordered. Over residues 555–566 (RSNQRNPFRSNP) the composition is skewed to polar residues.

Self-interacts. Interacts with OBE2, OBE3 and OBE4. Binds to VPg of pea seed borne mosaic virus (PSbMV), turnip mosaic virus (TuMV) and lettuce mosaic virus (LMV), but not with VPg of tobacco etch virus (TEV), cowpea mosaic virus (CPMV), tomato black ring virus (TBRV) and grapevine fan leaf virus (GFLV). Interacts with RBL. In terms of tissue distribution, expressed in roots, seedlings, stems, leaves, flowers and siliques, especially in the vasculature.

It localises to the nucleus. Its subcellular location is the nucleoplasm. In terms of biological role, probable transcription factor that acts together with OBE2 for the maintenance and/or establishment of both the shoot and root meristems, probably by controlling the expression of the meristem genes such as WUS, PLT1 and PLT2 and of genes required for auxin responses. Promotes cell meristematic activity via the WUSCHEL-CLAVATA pathway. Involved in the development of the basal pole and in auxin-mediated root and vascular development in the embryo. Confers sensitivity to turnip mosaic virus (TuMV) probably by promoting viral movement and multiplication via interaction with TuMV VPg. This Arabidopsis thaliana (Mouse-ear cress) protein is Protein OBERON 1.